Here is a 127-residue protein sequence, read N- to C-terminus: Mitochondrial pyruvate carrier 2 (127 aa).

At 2-40 (AAAGARGLRATYHRLMDKVELLLPKKLRPLYNHPAGPRT) the chain is on the mitochondrial matrix side. Lys-26 carries the post-translational modification N6-acetyllysine. A helical membrane pass occupies residues 41–61 (VFFWAPIMKWGLVCAGLADMA). At 62-72 (RPAEKLSTAQS) the chain is on the mitochondrial intermembrane side. Residues 73–90 (TVLMATGFIWSRYSLVII) form a helical membrane-spanning segment. Over 91–92 (PK) the chain is Mitochondrial matrix. The chain crosses the membrane as a helical span at residues 93-115 (NWSLFAVNFFVGSAGASQLFRIW). The Mitochondrial intermembrane segment spans residues 116–127 (RYNQELKSKGIQ).

This sequence belongs to the mitochondrial pyruvate carrier (MPC) (TC 2.A.105) family. Homodimer. Homooligomer. Forms heterodimers with MPC1 and MPC1L. The heterodimer is the more stable and dominant form.

Its subcellular location is the mitochondrion inner membrane. The enzyme catalyses pyruvate(out) + H(+)(out) = pyruvate(in) + H(+)(in). Its function is as follows. Mediates the uptake of pyruvate into mitochondria. The protein is Mitochondrial pyruvate carrier 2 (Mpc2) of Mus musculus (Mouse).